A 1135-amino-acid chain; its full sequence is APC membrane recruitment protein 1 (1135 aa).

Met1 is subject to N-acetylmethionine. Disordered stretches follow at residues 1-115, 156-308, 339-405, 447-484, 736-764, 921-948, and 1007-1135; these read METQ…EGTG, AEKF…VGDP, SMTD…EDDD, GLAP…DDSG, NFGG…KEGN, LQAQ…PLSL, and VPES…NLAK. Residues 10 to 19 are compositionally biased toward low complexity; it reads QAKGAAASGS. The span at 23–35 shows a compositional bias: basic and acidic residues; sequence QTAEKGAKNKAAE. Low complexity predominate over residues 36–50; the sequence is ATEGPTSEPSSSGPG. Residues 73-83 show a composition bias toward gly residues; that stretch reads FGGGRSKGSGK. Basic and acidic residues-rich tracts occupy residues 94–107 and 196–208; these read KTHD…HGPE and GPER…HEHV. The span at 238-248 shows a compositional bias: pro residues; sequence KVSPTPEPSPP. Ser246 carries the post-translational modification Phosphoserine. Basic and acidic residues-rich tracts occupy residues 253-262 and 282-291; these read MACKDPEKPM and EEPHSPETGE. The span at 373 to 405 shows a compositional bias: acidic residues; the sequence is ALPDDDDEEEEEEEEVELEEEEEEVKEEEEDDD. Over residues 455 to 466 the composition is skewed to polar residues; it reads TPQSDQQESAPN. The segment covering 926–938 has biased composition (acidic residues); sequence EDSDEEDEEEEEG. Residues 1058–1069 are compositionally biased toward low complexity; it reads PSCSSSSGGFSP. Over residues 1119 to 1135 the composition is skewed to polar residues; it reads SLATSYSSTAMNGNLAK.

It belongs to the Amer family. Interacts with CTNNB1, AXIN1, LRP6, KEAP1, APC and BTRC. Interacts with SCF (SKP1-CUL1-F-box protein) E3 ubiquitin-protein ligase complexes containing BTRC and/or FBXW11. Identified in the beta-catenin destruction complex containing CTNNB1, APC, AXIN1 and AXIN2. Interacts with WT1. Detected in fetal and adult kidney, brain and spleen.

Its subcellular location is the cytoplasm. The protein localises to the cell membrane. It is found in the nucleus. Functionally, regulator of the canonical Wnt signaling pathway. Acts by specifically binding phosphatidylinositol 4,5-bisphosphate (PtdIns(4,5)P2), translocating to the cell membrane and interacting with key regulators of the canonical Wnt signaling pathway, such as components of the beta-catenin destruction complex. Acts both as a positive and negative regulator of the Wnt signaling pathway, depending on the context: acts as a positive regulator by promoting LRP6 phosphorylation. Also acts as a negative regulator by acting as a scaffold protein for the beta-catenin destruction complex and promoting stabilization of Axin at the cell membrane. Promotes CTNNB1 ubiquitination and degradation. Involved in kidney development. The chain is APC membrane recruitment protein 1 (AMER1) from Homo sapiens (Human).